We begin with the raw amino-acid sequence, 268 residues long: Mediator of RNA polymerase II transcription subunit 18 (268 aa).

This sequence belongs to the Mediator complex subunit 18 family. Component of the Mediator complex.

The protein resides in the nucleus. Its function is as follows. Component of the Mediator complex, a coactivator involved in the regulated transcription of nearly all RNA polymerase II-dependent genes. Mediator functions as a bridge to convey information from gene-specific regulatory proteins to the basal RNA polymerase II transcription machinery. Mediator is recruited to promoters by direct interactions with regulatory proteins and serves as a scaffold for the assembly of a functional preinitiation complex with RNA polymerase II and the general transcription factors. The sequence is that of Mediator of RNA polymerase II transcription subunit 18 (srb5) from Neosartorya fischeri (strain ATCC 1020 / DSM 3700 / CBS 544.65 / FGSC A1164 / JCM 1740 / NRRL 181 / WB 181) (Aspergillus fischerianus).